A 448-amino-acid polypeptide reads, in one-letter code: Methylenetetrahydrofolate--tRNA-(uracil-5-)-methyltransferase TrmFO (448 aa).

FAD is bound at residue 13 to 18 (GAGLAG).

Belongs to the MnmG family. TrmFO subfamily. Requires FAD as cofactor.

The protein localises to the cytoplasm. The catalysed reaction is uridine(54) in tRNA + (6R)-5,10-methylene-5,6,7,8-tetrahydrofolate + NADH + H(+) = 5-methyluridine(54) in tRNA + (6S)-5,6,7,8-tetrahydrofolate + NAD(+). It carries out the reaction uridine(54) in tRNA + (6R)-5,10-methylene-5,6,7,8-tetrahydrofolate + NADPH + H(+) = 5-methyluridine(54) in tRNA + (6S)-5,6,7,8-tetrahydrofolate + NADP(+). Functionally, catalyzes the folate-dependent formation of 5-methyl-uridine at position 54 (M-5-U54) in all tRNAs. In Streptococcus pyogenes serotype M4 (strain MGAS10750), this protein is Methylenetetrahydrofolate--tRNA-(uracil-5-)-methyltransferase TrmFO.